Reading from the N-terminus, the 395-residue chain is RNA pseudouridine synthase 7 (395 aa).

The interval 1-21 (MKRKQQEDDNDDGVEKAVSPV) is disordered. One can recognise an S4 RNA-binding domain in the interval 74-136 (KTIVDLFADE…HEPPVMIDDV (63 aa)). Asp-187 is a catalytic residue. Residues 244-255 (EGRSTAEDANSS) show a composition bias toward polar residues. The tract at residues 244 to 263 (EGRSTAEDANSSGDDKKVKG) is disordered.

Belongs to the pseudouridine synthase RluA family.

The catalysed reaction is a uridine in RNA = a pseudouridine in RNA. This is RNA pseudouridine synthase 7 from Arabidopsis thaliana (Mouse-ear cress).